The chain runs to 87 residues: uncharacterized protein (87 aa).

The protein to A.fulgidus AF_0255 and AF_1348.

This is an uncharacterized protein from Archaeoglobus fulgidus (strain ATCC 49558 / DSM 4304 / JCM 9628 / NBRC 100126 / VC-16).